The primary structure comprises 61 residues: Small ribosomal subunit protein uS14 (61 aa).

Positions 24, 27, 40, and 43 each coordinate Zn(2+).

This sequence belongs to the universal ribosomal protein uS14 family. Zinc-binding uS14 subfamily. As to quaternary structure, part of the 30S ribosomal subunit. Contacts proteins S3 and S10. Requires Zn(2+) as cofactor.

Functionally, binds 16S rRNA, required for the assembly of 30S particles and may also be responsible for determining the conformation of the 16S rRNA at the A site. The chain is Small ribosomal subunit protein uS14 from Geobacillus stearothermophilus (Bacillus stearothermophilus).